The chain runs to 553 residues: Dihydroxy-acid dehydratase (553 aa).

A Mg(2+)-binding site is contributed by Asp-78. Cys-119 is a [2Fe-2S] cluster binding site. The Mg(2+) site is built by Asp-120 and Lys-121. Lys-121 is modified (N6-carboxylysine). Position 191 (Cys-191) interacts with [2Fe-2S] cluster. Glu-444 contacts Mg(2+). The active-site Proton acceptor is the Ser-470.

It belongs to the IlvD/Edd family. As to quaternary structure, homodimer. It depends on [2Fe-2S] cluster as a cofactor. The cofactor is Mg(2+).

The catalysed reaction is (2R)-2,3-dihydroxy-3-methylbutanoate = 3-methyl-2-oxobutanoate + H2O. It carries out the reaction (2R,3R)-2,3-dihydroxy-3-methylpentanoate = (S)-3-methyl-2-oxopentanoate + H2O. The protein operates within amino-acid biosynthesis; L-isoleucine biosynthesis; L-isoleucine from 2-oxobutanoate: step 3/4. It participates in amino-acid biosynthesis; L-valine biosynthesis; L-valine from pyruvate: step 3/4. Functionally, functions in the biosynthesis of branched-chain amino acids. Catalyzes the dehydration of (2R,3R)-2,3-dihydroxy-3-methylpentanoate (2,3-dihydroxy-3-methylvalerate) into 2-oxo-3-methylpentanoate (2-oxo-3-methylvalerate) and of (2R)-2,3-dihydroxy-3-methylbutanoate (2,3-dihydroxyisovalerate) into 2-oxo-3-methylbutanoate (2-oxoisovalerate), the penultimate precursor to L-isoleucine and L-valine, respectively. The sequence is that of Dihydroxy-acid dehydratase from Methanococcoides burtonii (strain DSM 6242 / NBRC 107633 / OCM 468 / ACE-M).